A 321-amino-acid polypeptide reads, in one-letter code: Transaldolase (321 aa).

Catalysis depends on Lys-132, which acts as the Schiff-base intermediate with substrate.

This sequence belongs to the transaldolase family. Type 1 subfamily. Homodimer.

Its subcellular location is the cytoplasm. The enzyme catalyses D-sedoheptulose 7-phosphate + D-glyceraldehyde 3-phosphate = D-erythrose 4-phosphate + beta-D-fructose 6-phosphate. It participates in carbohydrate degradation; pentose phosphate pathway; D-glyceraldehyde 3-phosphate and beta-D-fructose 6-phosphate from D-ribose 5-phosphate and D-xylulose 5-phosphate (non-oxidative stage): step 2/3. Functionally, transaldolase is important for the balance of metabolites in the pentose-phosphate pathway. This Rhizobium etli (strain ATCC 51251 / DSM 11541 / JCM 21823 / NBRC 15573 / CFN 42) protein is Transaldolase.